Here is a 305-residue protein sequence, read N- to C-terminus: Acyl transferase (305 aa).

Residues S114, D211, and H241 each act as charge relay system in the active site.

Belongs to the LuxD family.

Its pathway is lipid metabolism; fatty acid reduction for biolumincescence. Acyl transferase is part of the fatty acid reductase system required for aldehyde biosynthesis; it produces fatty acids for the luminescent reaction. In Vibrio harveyi (Beneckea harveyi), this protein is Acyl transferase (luxD).